Reading from the N-terminus, the 68-residue chain is MGVDVNVIFQIAGVGIVVAFLHTILDQMGKKEYAQWVTLLGFIYILFMVATIVDDLFKKIKAVFLFQG.

2 helical membrane-spanning segments follow: residues 5–25 (VNVI…HTIL) and 33–53 (YAQW…ATIV).

It is found in the cell membrane. The polypeptide is Stage III sporulation protein AC (spoIIIAC) (Bacillus subtilis (strain 168)).